The sequence spans 468 residues: 3-isopropylmalate dehydratase large subunit (468 aa).

Cys-349, Cys-409, and Cys-412 together coordinate [4Fe-4S] cluster.

This sequence belongs to the aconitase/IPM isomerase family. LeuC type 1 subfamily. In terms of assembly, heterodimer of LeuC and LeuD. Requires [4Fe-4S] cluster as cofactor.

It carries out the reaction (2R,3S)-3-isopropylmalate = (2S)-2-isopropylmalate. It participates in amino-acid biosynthesis; L-leucine biosynthesis; L-leucine from 3-methyl-2-oxobutanoate: step 2/4. Its function is as follows. Catalyzes the isomerization between 2-isopropylmalate and 3-isopropylmalate, via the formation of 2-isopropylmaleate. This Nitrobacter hamburgensis (strain DSM 10229 / NCIMB 13809 / X14) protein is 3-isopropylmalate dehydratase large subunit.